Reading from the N-terminus, the 181-residue chain is Inner membrane-spanning protein YciB (181 aa).

The next 5 helical transmembrane spans lie at 22–42, 50–70, 72–92, 118–138, and 148–168; these read IYTA…ILYF, MHLV…AFHD, AFIK…LAVS, VTWY…YVAF, and FKVF…VFYI.

It belongs to the YciB family.

It is found in the cell inner membrane. Plays a role in cell envelope biogenesis, maintenance of cell envelope integrity and membrane homeostasis. In Shewanella denitrificans (strain OS217 / ATCC BAA-1090 / DSM 15013), this protein is Inner membrane-spanning protein YciB.